Consider the following 433-residue polypeptide: Enolase (433 aa).

(2R)-2-phosphoglycerate is bound at residue Gln167. The Proton donor role is filled by Glu209. Mg(2+) contacts are provided by Asp246, Glu291, and Asp318. (2R)-2-phosphoglycerate-binding residues include Lys343, Arg372, Ser373, and Lys394. The active-site Proton acceptor is Lys343.

It belongs to the enolase family. Component of the RNA degradosome, a multiprotein complex involved in RNA processing and mRNA degradation. It depends on Mg(2+) as a cofactor.

The protein localises to the cytoplasm. It localises to the secreted. It is found in the cell surface. The enzyme catalyses (2R)-2-phosphoglycerate = phosphoenolpyruvate + H2O. It functions in the pathway carbohydrate degradation; glycolysis; pyruvate from D-glyceraldehyde 3-phosphate: step 4/5. Catalyzes the reversible conversion of 2-phosphoglycerate (2-PG) into phosphoenolpyruvate (PEP). It is essential for the degradation of carbohydrates via glycolysis. This chain is Enolase, found in Pasteurella multocida (strain Pm70).